The primary structure comprises 201 residues: Small ribosomal subunit protein uS4 (201 aa).

The tract at residues 20 to 46 (SGTGKELSRRPYAPGQHGQDRRGSLSE) is disordered. An S4 RNA-binding domain is found at 93–156 (RRLDNVVYRL…KDLQIVKEAL (64 aa)).

Belongs to the universal ribosomal protein uS4 family. Part of the 30S ribosomal subunit. Contacts protein S5. The interaction surface between S4 and S5 is involved in control of translational fidelity.

Functionally, one of the primary rRNA binding proteins, it binds directly to 16S rRNA where it nucleates assembly of the body of the 30S subunit. In terms of biological role, with S5 and S12 plays an important role in translational accuracy. The protein is Small ribosomal subunit protein uS4 of Ligilactobacillus salivarius (strain UCC118) (Lactobacillus salivarius).